Consider the following 119-residue polypeptide: MASSVVVALLVLLSLSGLEAIQHAPKIQVYSRHPAENGKPNFLNCYVSGFHPSDIEVDLLKNGKKIEKVEHSDLSFSKDWSFYLLYYTEFTPSEKDEYACRVSHVTFSTPKTVKWDRNI.

An N-terminal signal peptide occupies residues methionine 1 to alanine 20. One can recognise an Ig-like C1-type domain in the interval proline 25–lysine 114. Cysteine 45 and cysteine 100 are joined by a disulfide.

The protein belongs to the beta-2-microglobulin family. Heterodimer of an alpha chain and a beta chain. Beta-2-microglobulin is the beta-chain of major histocompatibility complex class I molecules.

Its subcellular location is the secreted. In terms of biological role, component of the class I major histocompatibility complex (MHC). Involved in the presentation of peptide antigens to the immune system. This is Beta-2-microglobulin (B2M) from Callithrix aurita (White-eared marmoset).